The primary structure comprises 96 residues: Cytoplasmic envelopment protein 3 (96 aa).

Gly2 carries the N-myristoyl glycine; by host lipid modification. Positions 18 to 19 (LI) match the Di-leucine-like internalization motif motif. The interval 37–43 (DIESEEE) is asp/Glu-rich (acidic). Ser40 carries the phosphoserine modification. The segment at 57–96 (RAPGRQRLRSSDPPSRHTHRRTPGGACPATQFPPPMSDSE) is disordered. Over residues 87–96 (QFPPPMSDSE) the composition is skewed to pro residues.

It belongs to the herpesviridae cytoplasmic envelopment protein 3 family. As to quaternary structure, interacts with cytoplasmic envelopment protein 2; this interaction is essential for the proper localization of each protein to the assembly complex and thus for the production of infectious virus. Interacts with gE (via C-terminus). Interacts with gD (via C-terminus). Interacts with UL56. Post-translationally, myristoylation and palmitoylation (probably on one or more of the nearby cysteines at the N-terminus) enable membrane-binding and Golgi apparatus-specific targeting and are essential for efficient packaging. In terms of processing, phosphorylated. Phosphorylation does not seem to be required for recycling to the host Golgi apparatus. Packaging is selective for underphosphorylated forms.

The protein resides in the virion tegument. It localises to the virion membrane. Its subcellular location is the host cell membrane. The protein localises to the host Golgi apparatus membrane. Functionally, plays an important role in the cytoplasmic envelopment of tegument proteins and capsids during the assembly and egress processes. Also participates in viral entry at the fusion step probably by regulating the core fusion machinery. This is Cytoplasmic envelopment protein 3 from Human herpesvirus 1 (strain KOS) (HHV-1).